Here is a 238-residue protein sequence, read N- to C-terminus: Orotidine 5'-phosphate decarboxylase (238 aa).

Residues Asp-10, Lys-32, 59–68 (DLKLHDIPNT), Thr-122, Arg-184, Gln-193, Gly-213, and Arg-214 contribute to the substrate site. Lys-61 (proton donor) is an active-site residue.

This sequence belongs to the OMP decarboxylase family. Type 1 subfamily. Homodimer.

The catalysed reaction is orotidine 5'-phosphate + H(+) = UMP + CO2. It participates in pyrimidine metabolism; UMP biosynthesis via de novo pathway; UMP from orotate: step 2/2. Its function is as follows. Catalyzes the decarboxylation of orotidine 5'-monophosphate (OMP) to uridine 5'-monophosphate (UMP). The sequence is that of Orotidine 5'-phosphate decarboxylase from Bacillus cereus (strain G9842).